The chain runs to 249 residues: CDP-diacylglycerol pyrophosphatase (249 aa).

A helical membrane pass occupies residues 7 to 27; sequence FLLAVVIVAAVAGIGYWKLAA.

Belongs to the Cdh family.

Its subcellular location is the cell inner membrane. The enzyme catalyses a CDP-1,2-diacyl-sn-glycerol + H2O = a 1,2-diacyl-sn-glycero-3-phosphate + CMP + 2 H(+). Its pathway is phospholipid metabolism; CDP-diacylglycerol degradation; phosphatidate from CDP-diacylglycerol: step 1/1. The sequence is that of CDP-diacylglycerol pyrophosphatase from Citrobacter koseri (strain ATCC BAA-895 / CDC 4225-83 / SGSC4696).